A 475-amino-acid polypeptide reads, in one-letter code: Ribulose bisphosphate carboxylase large chain (475 aa).

Positions Met1–Ser2 are excised as a propeptide. Pro3 bears the N-acetylproline mark. At Lys14 the chain carries N6,N6,N6-trimethyllysine. The substrate site is built by Asn123 and Thr173. Residue Lys175 is the Proton acceptor of the active site. Lys177 contacts substrate. The Mg(2+) site is built by Lys201, Asp203, and Glu204. N6-carboxylysine is present on Lys201. His294 functions as the Proton acceptor in the catalytic mechanism. Substrate-binding residues include Arg295, His327, and Ser379.

The protein belongs to the RuBisCO large chain family. Type I subfamily. Heterohexadecamer of 8 large chains and 8 small chains; disulfide-linked. The disulfide link is formed within the large subunit homodimers. Mg(2+) is required as a cofactor. The disulfide bond which can form in the large chain dimeric partners within the hexadecamer appears to be associated with oxidative stress and protein turnover.

It is found in the plastid. The protein localises to the chloroplast. The catalysed reaction is 2 (2R)-3-phosphoglycerate + 2 H(+) = D-ribulose 1,5-bisphosphate + CO2 + H2O. The enzyme catalyses D-ribulose 1,5-bisphosphate + O2 = 2-phosphoglycolate + (2R)-3-phosphoglycerate + 2 H(+). In terms of biological role, ruBisCO catalyzes two reactions: the carboxylation of D-ribulose 1,5-bisphosphate, the primary event in carbon dioxide fixation, as well as the oxidative fragmentation of the pentose substrate in the photorespiration process. Both reactions occur simultaneously and in competition at the same active site. The sequence is that of Ribulose bisphosphate carboxylase large chain (rbcL) from Marchantia polymorpha (Common liverwort).